A 309-amino-acid chain; its full sequence is Homoserine kinase (309 aa).

Pro91–Cys101 is an ATP binding site.

It belongs to the GHMP kinase family. Homoserine kinase subfamily.

The protein resides in the cytoplasm. It carries out the reaction L-homoserine + ATP = O-phospho-L-homoserine + ADP + H(+). It participates in amino-acid biosynthesis; L-threonine biosynthesis; L-threonine from L-aspartate: step 4/5. In terms of biological role, catalyzes the ATP-dependent phosphorylation of L-homoserine to L-homoserine phosphate. The chain is Homoserine kinase from Citrobacter koseri (strain ATCC BAA-895 / CDC 4225-83 / SGSC4696).